The sequence spans 795 residues: Protocadherin beta-4 (795 aa).

A signal peptide spans 1 to 27 (MKKLGRIHPNRQVLAFILMVFLSQVRL). Topologically, residues 28 to 689 (EPIRYSVLEE…AQADSLTVYL (662 aa)) are extracellular. Cadherin domains lie at 34 to 132 (VLEE…SPIF), 137 to 241 (VLLK…APEF), 246 to 346 (YGVQ…PPEL), 351 to 450 (LTSS…APAF), and 455 to 560 (YTLF…SPFV). An N-linked (GlcNAc...) asparagine glycan is attached at asparagine 183. N-linked (GlcNAc...) asparagine glycans are attached at residues asparagine 417 and asparagine 435. Asparagine 566 carries N-linked (GlcNAc...) asparagine glycosylation. Residues 567 to 670 (GSAPCTELVP…LVDGFSQPYL (104 aa)) enclose the Cadherin 6 domain. A helical transmembrane segment spans residues 690–710 (VVALASVSSLFLFSVLLFVAV). The Cytoplasmic portion of the chain corresponds to 711 to 795 (RLCRRSRAAS…PKFRNSLVFS (85 aa)).

The protein localises to the cell membrane. Its function is as follows. Potential calcium-dependent cell-adhesion protein. May be involved in the establishment and maintenance of specific neuronal connections in the brain. The polypeptide is Protocadherin beta-4 (PCDHB4) (Homo sapiens (Human)).